Reading from the N-terminus, the 148-residue chain is 3-hydroxyacyl-[acyl-carrier-protein] dehydratase FabZ (148 aa).

The active site involves histidine 50.

Belongs to the thioester dehydratase family. FabZ subfamily.

It localises to the cytoplasm. The enzyme catalyses a (3R)-hydroxyacyl-[ACP] = a (2E)-enoyl-[ACP] + H2O. In terms of biological role, involved in unsaturated fatty acids biosynthesis. Catalyzes the dehydration of short chain beta-hydroxyacyl-ACPs and long chain saturated and unsaturated beta-hydroxyacyl-ACPs. This chain is 3-hydroxyacyl-[acyl-carrier-protein] dehydratase FabZ, found in Lactobacillus helveticus (strain DPC 4571).